The sequence spans 341 residues: CD2 antigen cytoplasmic tail-binding protein 2 (341 aa).

The segment at 1–66 (MPKRKVTFQG…DGGSSKYDIL (66 aa)) is disordered. Lys-26 participates in a covalent cross-link: Glycyl lysine isopeptide (Lys-Gly) (interchain with G-Cter in SUMO2). Lys-44 is modified (N6-acetyllysine). Phosphoserine occurs at positions 46, 49, and 118. A compositionally biased stretch (acidic residues) spans 49-58 (SDEEEDDDDG). Disordered regions lie at residues 131 to 151 (RPPG…GQTS) and 178 to 199 (LGAR…PQRL). Ser-194 and Ser-195 each carry phosphoserine. The region spanning 280–338 (DVMWEYKWENTGDAELYGPFTSAQMQTWVSEGYFPDGVYCRKLDPPGGQFYNSKRIDFD) is the GYF domain.

In terms of assembly, component of the U5 snRNP complex composed of the U5 snRNA and at least PRPF6, PRPF8, SNRNP200, EFTUD2, SNRNP40, DDX23, TXNL4A and CD2BP2. Interacts directly with TXNL4A and PRPF6. Interacts (via GYF domain) with CD2 (via Pro-rich sequence in the cytoplasmic domain). Interacts with PQBP1.

It localises to the cytoplasm. It is found in the nucleus. In terms of biological role, involved in pre-mRNA splicing as component of the U5 snRNP complex that is involved in spliceosome assembly. This chain is CD2 antigen cytoplasmic tail-binding protein 2 (CD2BP2), found in Homo sapiens (Human).